Here is a 553-residue protein sequence, read N- to C-terminus: Methyl-coenzyme M reductase I subunit alpha (553 aa).

Residue Gln150 participates in coenzyme F430 binding. Coenzyme B is bound by residues Arg228, 259–260 (KH), and Arg273. The residue at position 274 (Arg274) is a 5-methylarginine. 2 residues coordinate coenzyme M: Tyr335 and Tyr447.

This sequence belongs to the methyl-coenzyme M reductase alpha subunit family. In terms of assembly, MCR is a hexamer of two alpha, two beta, and two gamma chains, forming a dimer of heterotrimers. It depends on coenzyme F430 as a cofactor. Post-translationally, is methylated on C5 of Arg-274 by the methyltransferase MJ0841. This post-translational methylation, despite being not essential in vivo, plays a role for the stability and structural integrity of MCR.

The protein resides in the cytoplasm. The catalysed reaction is coenzyme B + methyl-coenzyme M = methane + coenzyme M-coenzyme B heterodisulfide. Its pathway is one-carbon metabolism; methyl-coenzyme M reduction; methane from methyl-coenzyme M: step 1/1. Functionally, component of the methyl-coenzyme M reductase (MCR) I that catalyzes the reductive cleavage of methyl-coenzyme M (CoM-S-CH3 or 2-(methylthio)ethanesulfonate) using coenzyme B (CoB or 7-mercaptoheptanoylthreonine phosphate) as reductant which results in the production of methane and the mixed heterodisulfide of CoB and CoM (CoM-S-S-CoB). This is the final step in methanogenesis. This is Methyl-coenzyme M reductase I subunit alpha (mcrA) from Methanocaldococcus jannaschii (strain ATCC 43067 / DSM 2661 / JAL-1 / JCM 10045 / NBRC 100440) (Methanococcus jannaschii).